The primary structure comprises 511 residues: Cobyric acid synthase (511 aa).

The GATase cobBQ-type domain occupies 251–443; it reads LLDIAIICLP…IHGIFDNDVF (193 aa). Cysteine 332 functions as the Nucleophile in the catalytic mechanism. Histidine 435 is a catalytic residue.

Belongs to the CobB/CobQ family. CobQ subfamily.

The protein operates within cofactor biosynthesis; adenosylcobalamin biosynthesis. Catalyzes amidations at positions B, D, E, and G on adenosylcobyrinic A,C-diamide. NH(2) groups are provided by glutamine, and one molecule of ATP is hydrogenolyzed for each amidation. This is Cobyric acid synthase from Listeria monocytogenes serotype 4b (strain F2365).